The sequence spans 205 residues: ATP-dependent Clp protease proteolytic subunit (205 aa).

The active-site Nucleophile is serine 98. The active site involves histidine 123.

The protein belongs to the peptidase S14 family. In terms of assembly, fourteen ClpP subunits assemble into 2 heptameric rings which stack back to back to give a disk-like structure with a central cavity, resembling the structure of eukaryotic proteasomes.

It is found in the cytoplasm. The catalysed reaction is Hydrolysis of proteins to small peptides in the presence of ATP and magnesium. alpha-casein is the usual test substrate. In the absence of ATP, only oligopeptides shorter than five residues are hydrolyzed (such as succinyl-Leu-Tyr-|-NHMec, and Leu-Tyr-Leu-|-Tyr-Trp, in which cleavage of the -Tyr-|-Leu- and -Tyr-|-Trp bonds also occurs).. Functionally, cleaves peptides in various proteins in a process that requires ATP hydrolysis. Has a chymotrypsin-like activity. Plays a major role in the degradation of misfolded proteins. The protein is ATP-dependent Clp protease proteolytic subunit of Desulfosudis oleivorans (strain DSM 6200 / JCM 39069 / Hxd3) (Desulfococcus oleovorans).